A 339-amino-acid polypeptide reads, in one-letter code: MFYKIAQKVMFQMDPERAHNLAIGSLKMTGNSPLNAFYAQNIAPAPVSFMGLTFPNPVGLAAGMDKDGESIDAFHAMGFGHVEVGTVTPRPQPGNDLPRLFRLKPAKAIINRMGFNNKGVDNLVKNLIAKKTDIMVGVNIGKNKDTPVEQGKDDYLICMDKVYPYAAYIAVNISSPNTPGLRSLQYGDLLDELLSALKTKQLELAEKHKKYVPIALKIAPDLTTEEIENIAQSLIKNKFDGAIATNTTLTRDGVSGLANANESGGLSGKPLTELSTKVIKQLATCLNGQIPIIGVGGINSAEDALAKFDAGATMVQIYSGFIYQGPKLIKEIVEAYRLK.

FMN is bound by residues 62-66 and threonine 86; that span reads AGMDK. Lysine 66 serves as a coordination point for substrate. 111–115 serves as a coordination point for substrate; the sequence is NRMGF. Residues asparagine 139 and asparagine 172 each contribute to the FMN site. Asparagine 172 lines the substrate pocket. The Nucleophile role is filled by serine 175. A substrate-binding site is contributed by asparagine 177. FMN is bound by residues lysine 217 and threonine 245. Substrate is bound at residue 246-247; the sequence is NT. FMN contacts are provided by residues glycine 268, glycine 297, and 318–319; that span reads YS.

Belongs to the dihydroorotate dehydrogenase family. Type 2 subfamily. As to quaternary structure, monomer. FMN serves as cofactor.

Its subcellular location is the cell membrane. It carries out the reaction (S)-dihydroorotate + a quinone = orotate + a quinol. The protein operates within pyrimidine metabolism; UMP biosynthesis via de novo pathway; orotate from (S)-dihydroorotate (quinone route): step 1/1. In terms of biological role, catalyzes the conversion of dihydroorotate to orotate with quinone as electron acceptor. The protein is Dihydroorotate dehydrogenase (quinone) of Shewanella sp. (strain MR-4).